The sequence spans 430 residues: Tol-Pal system protein TolB (430 aa).

The first 21 residues, 1 to 21 (MKQALRVAFGFLILWASVLHA), serve as a signal peptide directing secretion.

This sequence belongs to the TolB family. The Tol-Pal system is composed of five core proteins: the inner membrane proteins TolA, TolQ and TolR, the periplasmic protein TolB and the outer membrane protein Pal. They form a network linking the inner and outer membranes and the peptidoglycan layer.

The protein resides in the periplasm. Its function is as follows. Part of the Tol-Pal system, which plays a role in outer membrane invagination during cell division and is important for maintaining outer membrane integrity. TolB occupies a key intermediary position in the Tol-Pal system because it communicates directly with both membrane-embedded components, Pal in the outer membrane and TolA in the inner membrane. This is Tol-Pal system protein TolB from Shigella boydii serotype 4 (strain Sb227).